We begin with the raw amino-acid sequence, 125 residues long: Small ribosomal subunit protein bS16 (125 aa).

Positions 87–125 are disordered; the sequence is EGKKKQALARQSASKKAVKEKTEESKGSEVDSETSTSAD. The span at 103-115 shows a compositional bias: basic and acidic residues; that stretch reads AVKEKTEESKGSE.

The protein belongs to the bacterial ribosomal protein bS16 family.

This Prochlorococcus marinus (strain MIT 9211) protein is Small ribosomal subunit protein bS16.